Here is a 144-residue protein sequence, read N- to C-terminus: Large ribosomal subunit protein uL13 (144 aa).

This sequence belongs to the universal ribosomal protein uL13 family. As to quaternary structure, part of the 50S ribosomal subunit.

This protein is one of the early assembly proteins of the 50S ribosomal subunit, although it is not seen to bind rRNA by itself. It is important during the early stages of 50S assembly. The polypeptide is Large ribosomal subunit protein uL13 (Mesomycoplasma hyopneumoniae (strain 7448) (Mycoplasma hyopneumoniae)).